Consider the following 587-residue polypeptide: Tyrosine-protein kinase transforming protein Src (587 aa).

Residues 1-58 (MGSSKSKPKDPSQRRRSLEPPDSTHHGGFPASQTPNKTAAPDTHRTPSRSFGTVATEP) form a disordered region. A lipid anchor (N-myristoyl glycine; by host) is attached at glycine 2. Positions 7–25 (KPKDPSQRRRSLEPPDSTH) are enriched in basic and acidic residues. The SH3 domain maps to 81–142 (GGVTTFVALY…PSNYVAPSDS (62 aa)). Positions 148 to 245 (WYFGKITRRE…GLCHRLTNVC (98 aa)) constitute an SH2 domain. The region spanning 267–520 (LRLEVKLGQG…YLQAFLEDYF (254 aa)) is the Protein kinase domain. ATP-binding positions include 273–281 (LGQGCFGEV) and lysine 295. Residue aspartate 386 is the Proton acceptor of the active site. The residue at position 416 (tyrosine 416) is a Phosphotyrosine; by autocatalysis.

It belongs to the protein kinase superfamily. Tyr protein kinase family. SRC subfamily. The phosphorylated form is termed pp60v-src.

The enzyme catalyses L-tyrosyl-[protein] + ATP = O-phospho-L-tyrosyl-[protein] + ADP + H(+). In terms of biological role, this phosphoprotein, required for both the initiation and the maintenance of neoplastic transformation, is a protein kinase that catalyzes the phosphorylation of tyrosine residues in vitro. The sequence is that of Tyrosine-protein kinase transforming protein Src (V-SRC) from Galliformes.